Consider the following 85-residue polypeptide: Large ribosomal subunit protein bL31B (85 aa).

This sequence belongs to the bacterial ribosomal protein bL31 family. Type B subfamily. In terms of assembly, part of the 50S ribosomal subunit.

This is Large ribosomal subunit protein bL31B from Staphylococcus haemolyticus (strain JCSC1435).